A 225-amino-acid chain; its full sequence is MMYHIPGVLSPQDVARFREQLEQAEWVDGRVTTGAQGAQVKNNQQVDTRSTLYAALQNEVLNAVNQHALFFAAALPRTLSTPLFNRYQNNETYGFHVDGAVRSHPQNGWMRTDLSATLFLSDPQSYDGGELVVNDTFGQHRVKLPAGDLVLYPSSSLHCVTPVTRGVRVASFMWIQSMIRDDKKRAMLFELDTNIQSLKSRHGESEEILSLLNLYHNLLREWSEI.

Residues 78–177 form the Fe2OG dioxygenase domain; that stretch reads TLSTPLFNRY…RVASFMWIQS (100 aa). Positions 96, 98, and 158 each coordinate Fe cation. Arg-168 serves as a coordination point for 2-oxoglutarate.

Fe(2+) is required as a cofactor. L-ascorbate serves as cofactor.

The sequence is that of PKHD-type hydroxylase YbiX from Escherichia coli O7:K1 (strain IAI39 / ExPEC).